The primary structure comprises 1189 residues: Pumilio homolog 1 (1189 aa).

N-acetylserine is present on S2. A Phosphoserine modification is found at S19. Positions 22-73 (LKHHPQEPANPNMPVVLTSGTGSQAQPQPAANQALAAGTHSSPVPGSIGVAG) are disordered. Low complexity predominate over residues 45–58 (QAQPQPAANQALAA). 3 positions are modified to phosphoserine: S75, S98, and S106. T112 is subject to Phosphothreonine. Residues S124, S159, S197, S209, and S229 each carry the phosphoserine modification. The segment at 233 to 272 (SCLRKGGFGPRDADSDENDKGEKKNKGTFDGDKLGDLKEE) is disordered. Basic and acidic residues predominate over residues 250 to 272 (NDKGEKKNKGTFDGDKLGDLKEE). Position 305 is a phosphoserine (S305). Residues 491–503 (QQSAPQAQQGQQQ) are compositionally biased toward low complexity. 2 disordered regions span residues 491 to 525 (QQSA…GQQT) and 614 to 647 (AGTT…SSFY). A compositionally biased stretch (polar residues) spans 512–525 (RPLTPNQNQQGQQT). A Phosphothreonine modification is found at T515. A compositionally biased stretch (low complexity) spans 627 to 647 (QQPQPQPQQQPSNNLASSSFY). S710 and S715 each carry phosphoserine. The segment at 743–773 (GPVGMPLPSQGPGHSQTPPPSLSSHGSSSSL) is disordered. The segment covering 764 to 773 (LSSHGSSSSL) has biased composition (low complexity). R797 carries the post-translational modification Omega-N-methylarginine. Phosphoserine occurs at positions 807 and 823. Residues 829-1171 (GRSRLLEDFR…HILAKLEKYY (343 aa)) enclose the PUM-HD domain. Pumilio repeat units follow at residues 849–884 (EIAG…LVFN), 885–920 (EILQ…ALAE), 921–958 (RIRG…EMVR), 959–994 (ELDG…FIID), 995–1030 (AFKG…PILE), 1031–1066 (ELHQ…KIVA), 1067–1102 (EIRG…VLID), and 1106–1145 (TMND…IVMH). The adenine-nucleotide binding in RNA target stretch occupies residues 864-868 (SRFIQ). The uracil-nucleotide binding in RNA target stretch occupies residues 900 to 904 (NYVIQ). Residues 936 to 940 (CRVIQ) are adenine-nucleotide binding in RNA target. The interval 974 to 978 (NHVVQ) is non-specific-nucleotide binding in RNA target. Residues 1010–1014 (CRVIQ) form an adenine-nucleotide binding in RNA target region. Residues 1046 to 1050 (NYVIQ) are uracil-nucleotide binding in RNA target. Guanine-nucleotide binding in RNA target stretches follow at residues 1082–1086 (SNVVE) and 1083–1086 (NVVE). The uracil-nucleotide binding in RNA target stretch occupies residues 1125–1129 (NYVVQ).

In terms of assembly, recruits the CCR4-POP2-NOT deadenylase leading to translational inhibition and mRNA degradation. Interacts with TRIM71 (via NHL repeats) in an RNA-dependent manner. Phosphorylation at Ser-715 promotes RNA-binding activity. Following growth factor stimulation phosphorylated at Ser-715, promoting binding to the 3'-UTR of CDKN1B/p27 mRNA. Widely expressed. Expressed in brain, heart, kidney, liver, lung, skin, intestine, spleen, testis and thymus. Weakly or not expressed in muscles and stomach. Expressed at various stages of myeloid and lymphoid cell development. Highly expressed in testis. Expressed in all major brain regions (at protein level).

It localises to the cytoplasm. It is found in the P-body. The protein resides in the cytoplasmic granule. Sequence-specific RNA-binding protein that acts as a post-transcriptional repressor by binding the 3'-UTR of mRNA targets. Binds to an RNA consensus sequence, the Pumilio Response Element (PRE), 5'-UGUANAUA-3', that is related to the Nanos Response Element (NRE). Mediates post-transcriptional repression of transcripts via different mechanisms: acts via direct recruitment of the CCR4-POP2-NOT deadenylase leading to translational inhibition and mRNA degradation. Also mediates deadenylation-independent repression by promoting accessibility of miRNAs. Following growth factor stimulation, phosphorylated and binds to the 3'-UTR of CDKN1B/p27 mRNA, inducing a local conformational change that exposes miRNA-binding sites, promoting association of miR-221 and miR-222, efficient suppression of CDKN1B/p27 expression, and rapid entry to the cell cycle. Acts as a post-transcriptional repressor of E2F3 mRNAs by binding to its 3'-UTR and facilitating miRNA regulation. Represses a program of genes necessary to maintain genomic stability such as key mitotic, DNA repair and DNA replication factors. Its ability to repress those target mRNAs is regulated by the lncRNA NORAD (non-coding RNA activated by DNA damage) which, due to its high abundance and multitude of PUMILIO binding sites, is able to sequester a significant fraction of PUM1 and PUM2 in the cytoplasm. Involved in neuronal functions by regulating ATXN1 mRNA levels: acts by binding to the 3'-UTR of ATXN1 transcripts, leading to their down-regulation independently of the miRNA machinery. In testis, acts as a post-transcriptional regulator of spermatogenesis by binding to the 3'-UTR of mRNAs coding for regulators of p53/TP53. Involved in embryonic stem cell renewal by facilitating the exit from the ground state: acts by targeting mRNAs coding for naive pluripotency transcription factors and accelerates their down-regulation at the onset of differentiation. Binds specifically to miRNA MIR199A precursor, with PUM2, regulates miRNA MIR199A expression at a postranscriptional level. This is Pumilio homolog 1 from Mus musculus (Mouse).